Here is a 193-residue protein sequence, read N- to C-terminus: uncharacterized protein (193 aa).

A disordered region spans residues 55 to 94; it reads PVGGAAGARSLSQALPAPAPPPPPPPGLGPSSERPWPSPW. A compositionally biased stretch (pro residues) spans 71 to 82; that stretch reads APAPPPPPPPGL.

This is an uncharacterized protein from Homo sapiens (Human).